The primary structure comprises 204 residues: Protein GET1 (204 aa).

The Lumenal segment spans residues Met-1 to Leu-4. The chain crosses the membrane as a helical span at residues Leu-5 to Thr-24. The Cytoplasmic portion of the chain corresponds to Thr-25 to Arg-110. Positions Ala-72–Thr-107 form a coiled coil. A helical membrane pass occupies residues Thr-111–Phe-131. The Lumenal portion of the chain corresponds to Trp-132–Ser-155. The chain crosses the membrane as a helical span at residues Val-156–Met-172. Residues Ile-173 to Ser-204 lie on the Cytoplasmic side of the membrane.

It belongs to the WRB/GET1 family. As to quaternary structure, interacts with GET3.

Its subcellular location is the endoplasmic reticulum membrane. In terms of biological role, required for the post-translational delivery of tail-anchored (TA) proteins to the endoplasmic reticulum. Acts as a membrane receptor for soluble GET3, which recognizes and selectively binds the transmembrane domain of TA proteins in the cytosol. The chain is Protein GET1 from Podospora anserina (strain S / ATCC MYA-4624 / DSM 980 / FGSC 10383) (Pleurage anserina).